The primary structure comprises 450 residues: NADP-specific glutamate dehydrogenase (450 aa).

The active site involves Lys114.

Belongs to the Glu/Leu/Phe/Val dehydrogenases family. As to quaternary structure, homohexamer.

It carries out the reaction L-glutamate + NADP(+) + H2O = 2-oxoglutarate + NH4(+) + NADPH + H(+). The sequence is that of NADP-specific glutamate dehydrogenase (gdhA) from Botryotinia fuckeliana (Noble rot fungus).